We begin with the raw amino-acid sequence, 49 residues long: Small integral membrane protein 27 (49 aa).

A helical transmembrane segment spans residues 11–31 (WTYSLLLLAIVLLSWGFVIYA).

The protein localises to the membrane. This chain is Small integral membrane protein 27, found in Mus musculus (Mouse).